The chain runs to 113 residues: Retrotransposon Gag-like protein 8A (113 aa).

Belongs to the FAM127 family.

The chain is Retrotransposon Gag-like protein 8A from Homo sapiens (Human).